Here is a 501-residue protein sequence, read N- to C-terminus: Alpha-ketoglutarate-dependent dioxygenase FTO (501 aa).

Positions 32 to 321 are fe2OG dioxygenase domain; it reads SSKDDTFYDL…SSTHRVAESS (290 aa). Residues arginine 96 and tyrosine 108 each contribute to the substrate site. Asparagine 203 lines the 2-oxoglutarate pocket. The interval 211–222 is loop L1; predicted to block binding of double-stranded DNA or RNA; that stretch reads SFLKEEPYFGMG. Fe cation contacts are provided by histidine 229 and aspartate 231. Residue 229–232 coordinates substrate; the sequence is HHDE. Tyrosine 289 serves as a coordination point for 2-oxoglutarate. Histidine 301 lines the Fe cation pocket. 2-oxoglutarate is bound by residues 310–312, threonine 314, and arginine 316; that span reads RFS.

Belongs to the fto family. In terms of assembly, monomer. May also exist as homodimer. Fe(2+) is required as a cofactor.

The protein localises to the nucleus. It is found in the nucleus speckle. The protein resides in the cytoplasm. It carries out the reaction a 5'-end (N(7)-methyl 5'-triphosphoguanosine)-(N(6),2'-O-dimethyladenosine) in mRNA + 2-oxoglutarate + O2 = a 5'-end (N(7)-methyl 5'-triphosphoguanosine)-(2'-O-methyladenosine) in mRNA + formaldehyde + succinate + CO2. The enzyme catalyses an N(6)-methyladenosine in mRNA + 2-oxoglutarate + O2 = an adenosine in mRNA + formaldehyde + succinate + CO2. It catalyses the reaction N(6)-methyladenosine in U6 snRNA + 2-oxoglutarate + O2 = adenosine in U6 snRNA + formaldehyde + succinate + CO2. The catalysed reaction is a 5'-end (N(7)-methyl 5'-triphosphoguanosine)-(N(6),2'-O-dimethyladenosine) in U6 snRNA + 2-oxoglutarate + O2 = a 5'-end (N(7)-methyl 5'-triphosphoguanosine)-(2'-O-methyladenosine) in U6 snRNA + formaldehyde + succinate + CO2. It carries out the reaction an N(1)-methyladenosine in tRNA + 2-oxoglutarate + O2 = an adenosine in tRNA + formaldehyde + succinate + CO2. Its activity is regulated as follows. Activated by ascorbate. Inhibited by N-oxalylglycine, fumarate and succinate. In terms of biological role, RNA demethylase that mediates oxidative demethylation of different RNA species, such as mRNAs, tRNAs and snRNAs, and acts as a regulator of fat mass, adipogenesis and energy homeostasis. Specifically demethylates N(6)-methyladenosine (m6A) RNA, the most prevalent internal modification of messenger RNA (mRNA) in higher eukaryotes. M6A demethylation by FTO affects mRNA expression and stability. Also able to demethylate m6A in U6 small nuclear RNA (snRNA). Mediates demethylation of N(6),2'-O-dimethyladenosine cap (m6A(m)), by demethylating the N(6)-methyladenosine at the second transcribed position of mRNAs and U6 snRNA. Demethylation of m6A(m) in the 5'-cap by FTO affects mRNA stability by promoting susceptibility to decapping. Also acts as a tRNA demethylase by removing N(1)-methyladenine from various tRNAs. This Xenopus laevis (African clawed frog) protein is Alpha-ketoglutarate-dependent dioxygenase FTO (fto).